Here is a 354-residue protein sequence, read N- to C-terminus: Uroporphyrinogen decarboxylase (354 aa).

Residues R27–R31, D77, Y154, T209, and H327 each bind substrate.

Belongs to the uroporphyrinogen decarboxylase family. As to quaternary structure, homodimer.

It is found in the cytoplasm. It catalyses the reaction uroporphyrinogen III + 4 H(+) = coproporphyrinogen III + 4 CO2. It functions in the pathway porphyrin-containing compound metabolism; protoporphyrin-IX biosynthesis; coproporphyrinogen-III from 5-aminolevulinate: step 4/4. In terms of biological role, catalyzes the decarboxylation of four acetate groups of uroporphyrinogen-III to yield coproporphyrinogen-III. This Sodalis glossinidius (strain morsitans) protein is Uroporphyrinogen decarboxylase.